Here is a 220-residue protein sequence, read N- to C-terminus: Small ribosomal subunit protein uS3 (220 aa).

One can recognise a KH type-2 domain in the interval 24-93 (IKEFLEYRLS…NPQIDVIDVS (70 aa)).

It belongs to the universal ribosomal protein uS3 family. In terms of assembly, part of the 30S ribosomal subunit.

In terms of biological role, binds the lower part of the 30S subunit head. This is Small ribosomal subunit protein uS3 from Pyrobaculum arsenaticum (strain DSM 13514 / JCM 11321 / PZ6).